The primary structure comprises 288 residues: 2-hydroxy-6-oxononadienedioate/2-hydroxy-6-oxononatrienedioate hydrolase (288 aa).

An AB hydrolase-1 domain is found at 38 to 274 (ALVLLHGSGP…RCGHWAQWEH (237 aa)). His-268 (proton acceptor) is an active-site residue.

The protein belongs to the AB hydrolase superfamily. MhpC family. Homodimer.

The catalysed reaction is (2Z,4E)-2-hydroxy-6-oxonona-2,4-dienedioate + H2O = (2Z)-2-hydroxypenta-2,4-dienoate + succinate + H(+). It catalyses the reaction (2Z,4E,7E)-2-hydroxy-6-oxonona-2,4,7-trienedioate + H2O = (2Z)-2-hydroxypenta-2,4-dienoate + fumarate + H(+). The protein operates within aromatic compound metabolism; 3-phenylpropanoate degradation. Functionally, catalyzes the cleavage of the C5-C6 bond of 2-hydroxy-6-oxononadienedioate and 2-hydroxy-6-oxononatrienedioate, a dienol ring fission product of the bacterial meta-cleavage pathway for degradation of phenylpropionic acid. The chain is 2-hydroxy-6-oxononadienedioate/2-hydroxy-6-oxononatrienedioate hydrolase from Burkholderia vietnamiensis (strain G4 / LMG 22486) (Burkholderia cepacia (strain R1808)).